The sequence spans 469 residues: Type II secretion system protein HxcR (469 aa).

Residue 246 to 253 participates in ATP binding; it reads GPTGSGKT.

Belongs to the GSP E family.

The protein localises to the cytoplasm. The enzyme catalyses ATP + H2O + cellular proteinSide 1 = ADP + phosphate + cellular proteinSide 2.. ATPase component of the type II secretion system required for the energy-dependent secretion of extracellular factors from the periplasm. Acts as a molecular motor to provide the energy that is required for the export of proteins. The Hxc system is involved in the secretion of low-molecular-weight alkaline phosphatase L-AP (LapA). Is probably also involved in the secretion of the phosphate-binding protein PstS. In Pseudomonas aeruginosa (strain ATCC 15692 / DSM 22644 / CIP 104116 / JCM 14847 / LMG 12228 / 1C / PRS 101 / PAO1), this protein is Type II secretion system protein HxcR.